The chain runs to 213 residues: Phospho-2-dehydro-3-deoxyheptonate aldolase, Tyr-sensitive (213 aa).

Belongs to the class-I DAHP synthase family.

It catalyses the reaction D-erythrose 4-phosphate + phosphoenolpyruvate + H2O = 7-phospho-2-dehydro-3-deoxy-D-arabino-heptonate + phosphate. It functions in the pathway metabolic intermediate biosynthesis; chorismate biosynthesis; chorismate from D-erythrose 4-phosphate and phosphoenolpyruvate: step 1/7. Stereospecific condensation of phosphoenolpyruvate (PEP) and D-erythrose-4-phosphate (E4P) giving rise to 3-deoxy-D-arabino-heptulosonate-7-phosphate (DAHP). This is Phospho-2-dehydro-3-deoxyheptonate aldolase, Tyr-sensitive (aroF) from Enterobacter agglomerans (Erwinia herbicola).